Consider the following 352-residue polypeptide: Nicotinate-nucleotide--dimethylbenzimidazole phosphoribosyltransferase (352 aa).

The active-site Proton acceptor is Glu-318.

Belongs to the CobT family.

The catalysed reaction is 5,6-dimethylbenzimidazole + nicotinate beta-D-ribonucleotide = alpha-ribazole 5'-phosphate + nicotinate + H(+). It functions in the pathway nucleoside biosynthesis; alpha-ribazole biosynthesis; alpha-ribazole from 5,6-dimethylbenzimidazole: step 1/2. Its function is as follows. Catalyzes the synthesis of alpha-ribazole-5'-phosphate from nicotinate mononucleotide (NAMN) and 5,6-dimethylbenzimidazole (DMB). The sequence is that of Nicotinate-nucleotide--dimethylbenzimidazole phosphoribosyltransferase from Dehalococcoides mccartyi (strain ATCC BAA-2100 / JCM 16839 / KCTC 5957 / BAV1).